The chain runs to 376 residues: Anhydro-N-acetylmuramic acid kinase (376 aa).

16–23 serves as a coordination point for ATP; the sequence is GTSMDGVD.

It belongs to the anhydro-N-acetylmuramic acid kinase family.

The catalysed reaction is 1,6-anhydro-N-acetyl-beta-muramate + ATP + H2O = N-acetyl-D-muramate 6-phosphate + ADP + H(+). Its pathway is amino-sugar metabolism; 1,6-anhydro-N-acetylmuramate degradation. The protein operates within cell wall biogenesis; peptidoglycan recycling. Catalyzes the specific phosphorylation of 1,6-anhydro-N-acetylmuramic acid (anhMurNAc) with the simultaneous cleavage of the 1,6-anhydro ring, generating MurNAc-6-P. Is required for the utilization of anhMurNAc either imported from the medium or derived from its own cell wall murein, and thus plays a role in cell wall recycling. The protein is Anhydro-N-acetylmuramic acid kinase of Paraburkholderia xenovorans (strain LB400).